The chain runs to 383 residues: 23S rRNA (uracil(747)-C(5))-methyltransferase RlmC (383 aa).

The [4Fe-4S] cluster site is built by C3, C11, C14, and C89. Q214, F243, E270, and N315 together coordinate S-adenosyl-L-methionine. Catalysis depends on C342, which acts as the Nucleophile.

Belongs to the class I-like SAM-binding methyltransferase superfamily. RNA M5U methyltransferase family. RlmC subfamily.

It carries out the reaction uridine(747) in 23S rRNA + S-adenosyl-L-methionine = 5-methyluridine(747) in 23S rRNA + S-adenosyl-L-homocysteine + H(+). Functionally, catalyzes the formation of 5-methyl-uridine at position 747 (m5U747) in 23S rRNA. The sequence is that of 23S rRNA (uracil(747)-C(5))-methyltransferase RlmC from Actinobacillus succinogenes (strain ATCC 55618 / DSM 22257 / CCUG 43843 / 130Z).